We begin with the raw amino-acid sequence, 680 residues long: MALDGIRMPDGCYADGTWELSVHVTDLNRDVTLRVTGEVHIGGVMLKLVEKLDVKKDWSDHALWWEKKRTWLLKTHWTLDKCGIQADAKLQFTPQHKLLRLQLPNMKYVKVKVNFSDRVFKAVSDICKTFNIRHPEELSLLKKPRDPTKKKKKKLDDQSEDEALELEGPLIMPGSGSIYSSPGLYSKTMTPTYDAHDGSPLSPTSAWFGDSALSEGNPGILAVSQPVTSPEILAKMFKPQALLDKAKTNQGWLDSSRSLMEQDVKENEALLLRFKYYSFFDLNPKYDAIRINQLYEQAKWALLLEEIECTEEEMMMFAALQYHINKLSIMTSENHLNNSDKEVDEVDAALSDLEITLEGGKTSTILGDITSIPELADYIKVFKPKKLTLKGYKQYWCTFKDTSISCYKSREESSGTPAHQLNLRGCEVTPDVNISGQKFNIKLLIPVAEGMNEIWLRCDNEKQYAHWMAACRLASKGKTMADSSYNLEVQNILSFLKMQHLNPDPQLIPDQITTDVNPECLVSPRYLKKYKSKQITARILEAHQNVAQMSLIEAKMRFIQAWQSLPEFGITHFIARFQGGKREELIGIAYNRLIRMDASTGDAIKTWRFSNMKQWNVNWEIKMVTVEFADEVRLSFICTEVDCKVVHEFIGGYIFLSTRAKDQNESLDEEMFYKLTSGWV.

Positions 40–81 (HIGGVMLKLVEKLDVKKDWSDHALWWEKKRTWLLKTHWTLDK) are interaction with membranes containing phosphatidylinositol phosphate. The tract at residues 141–162 (LKKPRDPTKKKKKKLDDQSEDE) is disordered. Phosphoserine occurs at positions 159, 181, 339, and 351. The FERM domain maps to 189–661 (MTPTYDAHDG…GYIFLSTRAK (473 aa)). The 97-residue stretch at 380 to 476 (KVFKPKKLTL…WMAACRLASK (97 aa)) folds into the PH domain. A 1,2-diacyl-sn-glycero-3-phospho-(1D-myo-inositol-3,4,5-trisphosphate) is bound at residue lysine 383. Serine 666 bears the Phosphoserine mark.

The protein belongs to the kindlin family. Interacts with ITGB1; the interaction is inhibited in presence of ITGB1BP1. Interacts with FBLIM1. Interacts with active, unphosphorylated CTNNB1. Identified in a complex with CTNNB1 and TCF7L2/TCF4. Interacts with ILK, ITGB1 and ITGB3. As to expression, detected in adult heart muscle (at protein level). Detected in heart, skeletal muscle and testis.

The protein localises to the cytoplasm. The protein resides in the cell cortex. It is found in the cytoskeleton. Its subcellular location is the stress fiber. It localises to the cell junction. The protein localises to the focal adhesion. The protein resides in the membrane. It is found in the cell projection. Its subcellular location is the lamellipodium membrane. It localises to the nucleus. The protein localises to the myofibril. The protein resides in the sarcomere. It is found in the i band. Its subcellular location is the cell surface. In terms of biological role, scaffolding protein that enhances integrin activation mediated by TLN1 and/or TLN2, but activates integrins only weakly by itself. Binds to membranes enriched in phosphoinositides. Enhances integrin-mediated cell adhesion onto the extracellular matrix and cell spreading; this requires both its ability to interact with integrins and with phospholipid membranes. Required for the assembly of focal adhesions. Participates in the connection between extracellular matrix adhesion sites and the actin cytoskeleton and also in the orchestration of actin assembly and cell shape modulation. Recruits FBLIM1 to focal adhesions. Plays a role in the TGFB1 and integrin signaling pathways. Stabilizes active CTNNB1 and plays a role in the regulation of transcription mediated by CTNNB1 and TCF7L2/TCF4 and in Wnt signaling. This is Fermitin family homolog 2 (Fermt2) from Mus musculus (Mouse).